Reading from the N-terminus, the 181-residue chain is Adenine phosphoribosyltransferase (181 aa).

The protein belongs to the purine/pyrimidine phosphoribosyltransferase family. In terms of assembly, homodimer.

It is found in the cytoplasm. The enzyme catalyses AMP + diphosphate = 5-phospho-alpha-D-ribose 1-diphosphate + adenine. It functions in the pathway purine metabolism; AMP biosynthesis via salvage pathway; AMP from adenine: step 1/1. Catalyzes a salvage reaction resulting in the formation of AMP, that is energically less costly than de novo synthesis. In Methylobacterium nodulans (strain LMG 21967 / CNCM I-2342 / ORS 2060), this protein is Adenine phosphoribosyltransferase.